Here is a 145-residue protein sequence, read N- to C-terminus: Ponticulin-like protein B (145 aa).

The signal sequence occupies residues 1-22; sequence MLFIKSLLLLLSLIFAVSNATG. An N-linked (GlcNAc...) asparagine glycan is attached at asparagine 34. Positions 107 to 126 are disordered; the sequence is DTTSSSTSPSSTSPSSTSPA. The segment covering 108–126 has biased composition (low complexity); the sequence is TTSSSTSPSSTSPSSTSPA. Residue serine 117 is the site of GPI-like-anchor amidated serine attachment. Residues 118 to 145 constitute a propeptide, removed in mature form; the sequence is TSPSSTSPASTLIGSIAFVTLAALFALI.

This sequence belongs to the ponticulin family. The GPI-like-anchor contains a phosphoceramide group, rather than a phosphatidyl group.

Its subcellular location is the cell membrane. Functionally, binds F-actin and nucleates actin assembly. This Dictyostelium discoideum (Social amoeba) protein is Ponticulin-like protein B (ponB).